We begin with the raw amino-acid sequence, 564 residues long: MFS-type efflux transporter ffsH (564 aa).

Over residues 1-18 (MSEAEKKASQDAQHKEPM) the composition is skewed to basic and acidic residues. The segment at 1–37 (MSEAEKKASQDAQHKEPMADSETQLDSDSAPSSQAEK) is disordered. Polar residues predominate over residues 21 to 35 (SETQLDSDSAPSSQA). Transmembrane regions (helical) follow at residues 43 to 63 (YPLS…ISAM), 98 to 118 (YVMI…GGAN), 131 to 151 (GIGA…LVPM), and 157 to 177 (FIGL…IIGG). A glycan (N-linked (GlcNAc...) asparagine) is linked at N182. 9 helical membrane passes run 187–207 (WVFY…VLFL), 226–246 (VVGN…LTYG), 254–274 (AANI…FIAW), 300–320 (FFIS…YPVY), 334–354 (VHLL…GGLV), 362–382 (PIHM…SVLT), 389–409 (AWAV…STTL), 427–447 (TWAY…AAIF), and 502–522 (VWLV…FEKE). A disordered region spans residues 540-564 (GDAKGDVERGEGQNDSREGGQNENV). The N-linked (GlcNAc...) asparagine glycan is linked to N553.

Belongs to the major facilitator superfamily.

The protein resides in the cell membrane. MFS-type efflux transporter; part of the gene cluster that mediates the biosynthesis of the cytotoxic leucine-containing cytochalasans, including aspochalasin C, aspochalasin E, TMC-169, flavichalasine F, aspergillin PZ, aspochalasin M and flavichalasine G. FfsH might be involved in the excretion of cytochalasans. The sequence is that of MFS-type efflux transporter ffsH from Aspergillus flavipes.